The primary structure comprises 490 residues: Glutamyl-tRNA(Gln) amidotransferase subunit A (490 aa).

Residues lysine 80 and serine 155 each act as charge relay system in the active site. Residue serine 179 is the Acyl-ester intermediate of the active site.

The protein belongs to the amidase family. GatA subfamily. In terms of assembly, heterotrimer of A, B and C subunits.

The catalysed reaction is L-glutamyl-tRNA(Gln) + L-glutamine + ATP + H2O = L-glutaminyl-tRNA(Gln) + L-glutamate + ADP + phosphate + H(+). Allows the formation of correctly charged Gln-tRNA(Gln) through the transamidation of misacylated Glu-tRNA(Gln) in organisms which lack glutaminyl-tRNA synthetase. The reaction takes place in the presence of glutamine and ATP through an activated gamma-phospho-Glu-tRNA(Gln). The protein is Glutamyl-tRNA(Gln) amidotransferase subunit A of Brevibacillus brevis (strain 47 / JCM 6285 / NBRC 100599).